The sequence spans 144 residues: Large ribosomal subunit protein uL16 (144 aa).

This sequence belongs to the universal ribosomal protein uL16 family. In terms of assembly, part of the 50S ribosomal subunit.

Binds 23S rRNA and is also seen to make contacts with the A and possibly P site tRNAs. The sequence is that of Large ribosomal subunit protein uL16 from Lacticaseibacillus paracasei (strain ATCC 334 / BCRC 17002 / CCUG 31169 / CIP 107868 / KCTC 3260 / NRRL B-441) (Lactobacillus paracasei).